Consider the following 469-residue polypeptide: Ubiquitin carboxyl-terminal hydrolase MINDY-1 (469 aa).

A disordered region spans residues 1-85; the sequence is MEYHQPEDPA…APPGPTLGTL (85 aa). Residues 23–53 are compositionally biased toward basic and acidic residues; it reads ENHEVLAGPDEHPQDTDARDADGEAREREPA. The segment covering 66–76 has biased composition (low complexity); sequence LESPLPEASSA. Residue Ser103 is modified to Phosphoserine. Residue Cys137 is the Nucleophile of the active site. His319 (proton acceptor) is an active-site residue. The ubiquitin-binding domain (UBD) stretch occupies residues 388–426; that stretch reads QVDQDYLIALSLQQQQPRGPLGLTDLELAQQLQQEEYQQ. The residue at position 441 (Ser441) is a Phosphoserine. Residues 441 to 469 are disordered; the sequence is SLQGRGATSGRPAGERRQRPKHESDCILL. Residues 453–469 are compositionally biased toward basic and acidic residues; that stretch reads AGERRQRPKHESDCILL.

This sequence belongs to the MINDY deubiquitinase family. FAM63 subfamily.

It carries out the reaction Thiol-dependent hydrolysis of ester, thioester, amide, peptide and isopeptide bonds formed by the C-terminal Gly of ubiquitin (a 76-residue protein attached to proteins as an intracellular targeting signal).. In terms of biological role, hydrolase that can specifically remove 'Lys-48'-linked conjugated ubiquitin from proteins. Has exodeubiquitinase activity and has a preference for long polyubiquitin chains. May play a regulatory role at the level of protein turnover. The protein is Ubiquitin carboxyl-terminal hydrolase MINDY-1 of Homo sapiens (Human).